Reading from the N-terminus, the 1032-residue chain is Importin beta-like protein KAP120 (1032 aa).

Position 2 is an N-acetylalanine (alanine 2). The region spanning 31–103 is the Importin N-terminal domain; sequence AEQQLRQWET…RGRLFEMIDE (73 aa).

This sequence belongs to the importin beta family. In terms of assembly, interacts with GTP-bound GSP1 and RFP1. Associates with the nuclear pore complex.

It localises to the cytoplasm. Its subcellular location is the nucleus. Its function is as follows. Functions in nuclear protein import as nuclear transport receptor. Serves as receptor for nuclear localization signals (NLS) in cargo substrates. Thought to mediate docking of the importin/substrate complex to the nuclear pore complex (NPC) through binding to nucleoporin and the complex is subsequently translocated through the pore by an energy requiring, RAN-dependent mechanism. Required for nuclear import of Ho endonuclease and RFP1, and involved in rRNA-processing and assembly or export of 60S ribosomal subunits. This is Importin beta-like protein KAP120 (KAP120) from Saccharomyces cerevisiae (strain ATCC 204508 / S288c) (Baker's yeast).